We begin with the raw amino-acid sequence, 103 residues long: Small ribosomal subunit protein uS10 (103 aa).

It belongs to the universal ribosomal protein uS10 family. Part of the 30S ribosomal subunit.

Its function is as follows. Involved in the binding of tRNA to the ribosomes. This chain is Small ribosomal subunit protein uS10, found in Campylobacter lari (strain RM2100 / D67 / ATCC BAA-1060).